Consider the following 176-residue polypeptide: Late lactation protein A (176 aa).

An N-terminal signal peptide occupies residues 1–18; that stretch reads MRVLFLTISLSLFSIIHA. Cys78 and Cys171 form a disulfide bridge.

This sequence belongs to the calycin superfamily. Lipocalin family. In terms of tissue distribution, mammary gland specific. Secreted in milk.

It localises to the secreted. In terms of biological role, probably serves a role in the transport of a small ligand released during the hydrolysis of milk fat. This is Late lactation protein A (LLPA) from Notamacropus eugenii (Tammar wallaby).